A 140-amino-acid polypeptide reads, in one-letter code: uncharacterized protein (140 aa).

This is an uncharacterized protein from Xylella fastidiosa (strain 9a5c).